The chain runs to 490 residues: Cysteine--tRNA ligase (490 aa).

C43 provides a ligand contact to Zn(2+). Positions 45 to 55 (MTVQSSPHLGH) match the 'HIGH' region motif. The segment at 177–204 (VDEMSPAEDSDPRGKRDPRDFALWKGHK) is disordered. Over residues 186–204 (SDPRGKRDPRDFALWKGHK) the composition is skewed to basic and acidic residues. C228, H253, and E257 together coordinate Zn(2+). The 'KMSKS' region motif lies at 284–288 (KMSKS). K287 lines the ATP pocket.

Belongs to the class-I aminoacyl-tRNA synthetase family. Monomer. Requires Zn(2+) as cofactor.

It localises to the cytoplasm. It carries out the reaction tRNA(Cys) + L-cysteine + ATP = L-cysteinyl-tRNA(Cys) + AMP + diphosphate. In Cutibacterium acnes (strain DSM 16379 / KPA171202) (Propionibacterium acnes), this protein is Cysteine--tRNA ligase.